Consider the following 129-residue polypeptide: Glutaredoxin-like protein ECU08_1380 (129 aa).

Residues 26-126 (EADYGEMVRR…PLLTQNREPV (101 aa)) enclose the Glutaredoxin domain.

The protein belongs to the glutaredoxin family.

Its subcellular location is the cytoplasm. In terms of biological role, has a glutathione-disulfide oxidoreductase activity in the presence of NADPH and glutathione reductase. Reduces low molecular weight disulfides and proteins. The sequence is that of Glutaredoxin-like protein ECU08_1380 from Encephalitozoon cuniculi (strain GB-M1) (Microsporidian parasite).